The primary structure comprises 297 residues: Phosphoribosylaminoimidazole-succinocarboxamide synthase (297 aa).

Belongs to the SAICAR synthetase family.

The enzyme catalyses 5-amino-1-(5-phospho-D-ribosyl)imidazole-4-carboxylate + L-aspartate + ATP = (2S)-2-[5-amino-1-(5-phospho-beta-D-ribosyl)imidazole-4-carboxamido]succinate + ADP + phosphate + 2 H(+). It functions in the pathway purine metabolism; IMP biosynthesis via de novo pathway; 5-amino-1-(5-phospho-D-ribosyl)imidazole-4-carboxamide from 5-amino-1-(5-phospho-D-ribosyl)imidazole-4-carboxylate: step 1/2. In Corynebacterium glutamicum (strain ATCC 13032 / DSM 20300 / JCM 1318 / BCRC 11384 / CCUG 27702 / LMG 3730 / NBRC 12168 / NCIMB 10025 / NRRL B-2784 / 534), this protein is Phosphoribosylaminoimidazole-succinocarboxamide synthase.